Reading from the N-terminus, the 272-residue chain is Soluble interferon gamma receptor OPG193 (272 aa).

An N-terminal signal peptide occupies residues 1–13; sequence MRYIIILAVLFIN. Residues asparagine 42, asparagine 150, and asparagine 267 are each glycosylated (N-linked (GlcNAc...) asparagine; by host).

This sequence belongs to the type II cytokine receptor family. In terms of assembly, homodimer. Interacts with host IFNG.

It is found in the secreted. In terms of biological role, counteracts the antiviral effects of host IFN-gamma. Acts as a soluble IFN-gamma receptor and thus inhibits the interaction between host IFN-gamma and its receptor. This is Soluble interferon gamma receptor OPG193 (OPG193) from Homo sapiens (Human).